A 344-amino-acid polypeptide reads, in one-letter code: Protein BIM1 (344 aa).

N-acetylserine is present on Ser-2. Residues 6-107 enclose the Calponin-homology (CH) domain; sequence GESRTELLTW…FLQWLKKHWI (102 aa). Positions 126–173 are disordered; sequence IITNNSATKPRTVSNPTTAKRSSSTGTGSAMSGGLATRHSSLGINGSR. Residues 127-146 are compositionally biased toward polar residues; it reads ITNNSATKPRTVSNPTTAKR. The span at 147 to 159 shows a compositional bias: low complexity; sequence SSSTGTGSAMSGG. Residue Ser-157 is modified to Phosphoserine. Over residues 163-173 the composition is skewed to polar residues; that stretch reads RHSSLGINGSR. Residues 188 to 281 form the EB1 C-terminal domain; the sequence is ELTKSQETIG…LYATAEGFEM (94 aa). The disordered stretch occupies residues 292–312; that stretch reads NLGEHGTVPNQGGYANSNGEV.

This sequence belongs to the MAPRE family.

The protein resides in the cytoplasm. It localises to the cytoskeleton. In terms of biological role, binds microtubules. The sequence is that of Protein BIM1 (BIM1) from Saccharomyces cerevisiae (strain ATCC 204508 / S288c) (Baker's yeast).